A 736-amino-acid chain; its full sequence is Alpha-xylosidase A (736 aa).

The first 18 residues, methionine 1 to alanine 18, serve as a signal peptide directing secretion. Residues asparagine 24, asparagine 279, asparagine 332, and asparagine 376 are each glycosylated (N-linked (GlcNAc...) asparagine). Aspartate 413 is an active-site residue. Asparagine 471 carries an N-linked (GlcNAc...) asparagine glycan. Aspartate 505 (proton donor) is an active-site residue. Asparagine 655, asparagine 676, asparagine 690, and asparagine 701 each carry an N-linked (GlcNAc...) asparagine glycan.

Belongs to the glycosyl hydrolase 31 family.

It localises to the secreted. It carries out the reaction Hydrolysis of terminal, non-reducing alpha-D-xylose residues with release of alpha-D-xylose.. In terms of biological role, catalyzes the liberation of alpha-xylose from the non-reducing terminal glucose of xyloglucan oligosaccharides. The polypeptide is Alpha-xylosidase A (Aspergillus niger (strain ATCC MYA-4892 / CBS 513.88 / FGSC A1513)).